Consider the following 455-residue polypeptide: Ammonium transporter Rh type B (455 aa).

At 1 to 10 (MARIPRHRRL) the chain is on the cytoplasmic side. A helical membrane pass occupies residues 11–31 (VLPLLCLLFQGATSLLFAIFV). The Extracellular portion of the chain corresponds to 32–58 (RYNHETDAALWHWGNHSNVDNEFYFRY). N46 is a glycosylation site (N-linked (GlcNAc...) asparagine). The helical transmembrane segment at 59 to 79 (PSFQDVHVMVFVGFGFLMVFL) threads the bilayer. Topologically, residues 80–83 (QRYG) are cytoplasmic. A helical membrane pass occupies residues 84–104 (FSSVGFTFLVATFTLQWATLL). At 105 to 121 (QGFLHSFHGGHIHIGVE) the chain is on the extracellular side. A helical transmembrane segment spans residues 122–142 (SLINADFCAGAVLISFGAVLG). The Cytoplasmic segment spans residues 143–148 (KTGPAQ). A helical membrane pass occupies residues 149-169 (LLLMALLEAVLFSVNEFILLS). The Extracellular portion of the chain corresponds to 170 to 176 (LLGVRDA). The helical transmembrane segment at 177–197 (GGSMTIHTFGAYFGLFLSRVL) threads the bilayer. The Cytoplasmic portion of the chain corresponds to 198–216 (YRSQLEKSRHRQTSVYNSD). Residues 217 to 237 (LFAMIGTIFLWVFWPSFNSAP) traverse the membrane as a helical segment. The Extracellular segment spans residues 238-247 (TALGDGQHRT). The helical transmembrane segment at 248-270 (VVNTYYSLTASTLSTFALSALVS) threads the bilayer. The Cytoplasmic portion of the chain corresponds to 271 to 274 (GDGR). The helical transmembrane segment at 275–295 (LDMVHIQNAALAGGVVVGTAS) threads the bilayer. E296 is a topological domain (extracellular). A helical transmembrane segment spans residues 297–317 (MMLTPFGALAAGFLAGTVSTL). The Cytoplasmic segment spans residues 318 to 340 (GYKFFTPILESRFKLQDTCGVHN). Residues 341-361 (LHGMPGLLGAILGVLVAALAT) traverse the membrane as a helical segment. At 362–390 (HEAYGDGLQTVFPLIAKGQRSATSQAMYQ) the chain is on the extracellular side. Residues 391 to 411 (LFGMFVTLVFASVGGSLGGLL) form a helical membrane-spanning segment. Over 412 to 455 (LKLPFLDSPPDSQCFEDQVYWEVPGEQEAETQRPLRTEEPDTQA) the chain is Cytoplasmic. Positions 413-421 (KLPFLDSPP) are interaction with ANK3.

This sequence belongs to the ammonium transporter (TC 2.A.49) family. Rh subfamily. As to quaternary structure, interacts (via C-terminus) with ANK2 and ANK3; required for targeting to the basolateral membrane. Post-translationally, N-glycosylated. Expressed in kidney by connecting segments and collecting tubules (at protein level).

Its subcellular location is the basolateral cell membrane. The protein localises to the cytoplasmic vesicle membrane. It catalyses the reaction NH4(+)(in) = NH4(+)(out). The catalysed reaction is methylamine(out) = methylamine(in). It carries out the reaction CO2(out) = CO2(in). Functionally, ammonium transporter involved in the maintenance of acid-base homeostasis. Transports ammonium and its related derivative methylammonium across the basolateral plasma membrane of epithelial cells likely contributing to renal transepithelial ammonia transport and ammonia metabolism. May transport either NH4(+) or NH3 ammonia species predominantly mediating an electrogenic NH4(+) transport. May act as a CO2 channel providing for renal acid secretion. The polypeptide is Ammonium transporter Rh type B (Rhbg) (Rattus norvegicus (Rat)).